We begin with the raw amino-acid sequence, 652 residues long: DNA ligase (652 aa).

NAD(+)-binding positions include 29 to 33 (DSEYD), 78 to 79 (SL), and Glu107. The active-site N6-AMP-lysine intermediate is Lys109. Arg130, Glu164, Lys278, and Lys302 together coordinate NAD(+). Zn(2+)-binding residues include Cys395, Cys398, Cys413, and Cys418. The 76-residue stretch at 577 to 652 (VADAALSGLT…VRDEAWLESL (76 aa)) folds into the BRCT domain.

The protein belongs to the NAD-dependent DNA ligase family. LigA subfamily. Mg(2+) is required as a cofactor. Mn(2+) serves as cofactor.

The catalysed reaction is NAD(+) + (deoxyribonucleotide)n-3'-hydroxyl + 5'-phospho-(deoxyribonucleotide)m = (deoxyribonucleotide)n+m + AMP + beta-nicotinamide D-nucleotide.. In terms of biological role, DNA ligase that catalyzes the formation of phosphodiester linkages between 5'-phosphoryl and 3'-hydroxyl groups in double-stranded DNA using NAD as a coenzyme and as the energy source for the reaction. It is essential for DNA replication and repair of damaged DNA. The protein is DNA ligase of Streptococcus pneumoniae (strain JJA).